A 101-amino-acid polypeptide reads, in one-letter code: Large ribosomal subunit protein bL21 (101 aa).

It belongs to the bacterial ribosomal protein bL21 family. Part of the 50S ribosomal subunit. Contacts protein L20.

This protein binds to 23S rRNA in the presence of protein L20. This chain is Large ribosomal subunit protein bL21, found in Micrococcus luteus (strain ATCC 4698 / DSM 20030 / JCM 1464 / CCM 169 / CCUG 5858 / IAM 1056 / NBRC 3333 / NCIMB 9278 / NCTC 2665 / VKM Ac-2230) (Micrococcus lysodeikticus).